The following is a 116-amino-acid chain: NADH-ubiquinone oxidoreductase chain 3 (116 aa).

The next 3 membrane-spanning stretches (helical) occupy residues 3–23 (LITTIITITITLSAVLATISF), 56–76 (FFLIAILFLLFDLEIALLLPL), and 85–105 (PALTLVWSTAVLALLTLGLIY).

The protein belongs to the complex I subunit 3 family.

The protein localises to the mitochondrion membrane. The enzyme catalyses a ubiquinone + NADH + 5 H(+)(in) = a ubiquinol + NAD(+) + 4 H(+)(out). Functionally, core subunit of the mitochondrial membrane respiratory chain NADH dehydrogenase (Complex I) that is believed to belong to the minimal assembly required for catalysis. Complex I functions in the transfer of electrons from NADH to the respiratory chain. The immediate electron acceptor for the enzyme is believed to be ubiquinone. This Oncorhynchus masou (Cherry salmon) protein is NADH-ubiquinone oxidoreductase chain 3 (MT-ND3).